Consider the following 577-residue polypeptide: Proline--tRNA ligase (577 aa).

Belongs to the class-II aminoacyl-tRNA synthetase family. ProS type 1 subfamily. Homodimer.

The protein localises to the cytoplasm. The catalysed reaction is tRNA(Pro) + L-proline + ATP = L-prolyl-tRNA(Pro) + AMP + diphosphate. Functionally, catalyzes the attachment of proline to tRNA(Pro) in a two-step reaction: proline is first activated by ATP to form Pro-AMP and then transferred to the acceptor end of tRNA(Pro). As ProRS can inadvertently accommodate and process non-cognate amino acids such as alanine and cysteine, to avoid such errors it has two additional distinct editing activities against alanine. One activity is designated as 'pretransfer' editing and involves the tRNA(Pro)-independent hydrolysis of activated Ala-AMP. The other activity is designated 'posttransfer' editing and involves deacylation of mischarged Ala-tRNA(Pro). The misacylated Cys-tRNA(Pro) is not edited by ProRS. This Helicobacter pylori (strain G27) protein is Proline--tRNA ligase.